The sequence spans 226 residues: Ribonuclease 3 (226 aa).

The 123-residue stretch at 6 to 128 folds into the RNase III domain; sequence INRLQRKLGY…LIGGIFLDSD (123 aa). Mg(2+) is bound at residue E41. D45 is an active-site residue. Residues D114 and E117 each coordinate Mg(2+). E117 is a catalytic residue. Residues 155–225 enclose the DRBM domain; it reads DPKTRLQEFL…AEQALKQLEL (71 aa).

This sequence belongs to the ribonuclease III family. In terms of assembly, homodimer. The cofactor is Mg(2+).

Its subcellular location is the cytoplasm. It catalyses the reaction Endonucleolytic cleavage to 5'-phosphomonoester.. Its function is as follows. Digests double-stranded RNA. Involved in the processing of primary rRNA transcript to yield the immediate precursors to the large and small rRNAs (23S and 16S). Processes some mRNAs, and tRNAs when they are encoded in the rRNA operon. Processes pre-crRNA and tracrRNA of type II CRISPR loci if present in the organism. The polypeptide is Ribonuclease 3 (Edwardsiella ictaluri (strain 93-146)).